We begin with the raw amino-acid sequence, 1551 residues long: MGKDSFTPLYDGGDSSHVHLNKFGSNQLSQSKKSWIARNFSRRECIRFVPKSHDVSRCKCGRPRERHSQQALESGQGSEEWNVASCTTKHPTNAYGEIDFEGYGGQKRAPYLRMSHDTDANLVITLMLKRWNLEIPNLVISVTGGAKSFVLKPRLREMFRRGLIKAAKTTGAWIITGGTNTGVMKHVGEAVKEQQLMFGSDTQVNVIGIATWGIVDKQSDLISEKNGKYPALYSMEPTPGHQGAMLDPNHSHFFLVDDGTEGKYGVEIGMRSRIEEAIMKVKTDSRSEAGSIGVPVVLLVLEGGPNTVATMYELIKKKVPAVVIDGSGRAASVVGFAYNHTIKRNVDGQTINVIDPQYEDEVRAKVVEVFGAKGADKTYSMIKDVLEDEKMISVYSLDGEISQDIDLAILKALLKANRSSPVAQLNLALAWNRIDLAKSDIFTEEQQWTTETLSAAMLTALLDDKAEFAELFLQNGLSMREFLSLDILCKLYAEVPGNTTIKPLLQKEMGKRQVKTIDMDVVGEVIEELMGDMFESYYRKDGHYFGELASYAEGLVLKNRKSSKDLLANINRIDPLPTPYLDVFLWAVLCNRRELARVLWEAGREPMAAALMASRLLKRMASRAQEDNTITDISSDLYDHARLFEERAVGVLDECFNENETLSQTLLVRELDHYSRMTALELAVSAESQDFIAHTSCQVLLTRLWMGTMAMNTRWWKVLVCLYLPVLIFPIIYFVPDEQHERQAAEREHQKSLNQKSSKVKSHKEKNDAPVVPVYRSKEEKAVSNDEEARVGTENEEEDFQLEDYIPEIREDDSMEVIMRNKKLGFCDRIMHFYSAPFSKFVGNVVGYLAFIFLYAYVVLFNFPRFDPAKTLGGIHPTEIVLYFWVFTILIEEIRQLAAKPPKYIKDKVSVYFSDTWNFVDIFSLTVFIIAIILRFFTNSRIFTASRIILSLDIIFFIVRSLQIFSVNRLLGPKLVMIQKMMQDLAQFIIILAVFTIAYGIALHAVMFPSPGIYARNNTWVTITSVVQYPYWQMYGELFLDEIQGEKPKEFGEVDPDGRWLSPLLLAIYMVFTNILLLNLLIAIFNYTFERVQEDSDKVWKFQRYDLVQEYHSRPVFAPPLVLLGHILIFIRWVWRMCRCGHPPRGSTMKIGLSPAEMEQMDNWEFQAAEMYIHQQQQKNSGTLEERVRALGDRVDCINSQLNRVLDSMSGTRAHALTDGNGLEGGHDSEGRLARMEVELSSNSESLQKILALLQQQPPVKGQAAVPIQLTLLHYKARSSPYPGSTAKRFAVQDNMVDWQVPFPDYKPVNYTAPVVLANPVWADKDLMAMSPRPELPYNQMDHTCNVNRVSYNGTYVVKDGLPLNPMGRTGMQGRGLLGRFGPNHAADPVVTRWKRTSAGVMLQGGKKVLEFVAIQRKDNNQWAIPGGMVEPGQLVTQALKAEFGEEAMAKLNVSQEEKERIAKQIERLFQQGQEIYKGYVDDPRNTDNAWMETVAVNFHDDKGDLFGDITLQAGDDAAAVRWQRVSGNIPLYASHVSILEKVAKMRDAAF.

Over 1–714 (MGKDSFTPLY…WMGTMAMNTR (714 aa)) the chain is Cytoplasmic. The stretch at 715 to 730 (WWKVLVCLYLPVLIFP) is an intramembrane region. The Cytoplasmic segment spans residues 731–837 (IIYFVPDEQH…DRIMHFYSAP (107 aa)). The interval 744–767 (AAEREHQKSLNQKSSKVKSHKEKN) is disordered. Residues 838 to 858 (FSKFVGNVVGYLAFIFLYAYV) form a helical membrane-spanning segment. Residues 859–877 (VLFNFPRFDPAKTLGGIHP) are Extracellular-facing. The chain crosses the membrane as a helical span at residues 878–898 (TEIVLYFWVFTILIEEIRQLA). Positions 893 and 896 each coordinate Ca(2+). The Cytoplasmic portion of the chain corresponds to 899-916 (AKPPKYIKDKVSVYFSDT). Residues 917–937 (WNFVDIFSLTVFIIAIILRFF) traverse the membrane as a helical segment. Ca(2+) contacts are provided by N918 and D921. The Extracellular portion of the chain corresponds to 938–947 (TNSRIFTASR). Residues 948–968 (IILSLDIIFFIVRSLQIFSVN) traverse the membrane as a helical segment. Over 969–980 (RLLGPKLVMIQK) the chain is Cytoplasmic. Residues 981–1001 (MMQDLAQFIIILAVFTIAYGI) form a helical membrane-spanning segment. The Extracellular portion of the chain corresponds to 1002 to 1018 (ALHAVMFPSPGIYARNN). Residue N1017 is glycosylated (N-linked (GlcNAc...) asparagine). An intramembrane region (pore-forming) is located at residues 1019 to 1034 (TWVTITSVVQYPYWQM). A Selectivity filter motif is present at residues 1035–1037 (YGE). Topologically, residues 1035–1059 (YGELFLDEIQGEKPKEFGEVDPDGR) are extracellular. Positions 1040 to 1042 (LDE) match the Prevents fast channel inactivation motif. The helical transmembrane segment at 1060–1080 (WLSPLLLAIYMVFTNILLLNL) threads the bilayer. The Cytoplasmic portion of the chain corresponds to 1081–1116 (LIAIFNYTFERVQEDSDKVWKFQRYDLVQEYHSRPV). The stretch at 1117–1135 (FAPPLVLLGHILIFIRWVW) is an intramembrane region. Over 1136-1551 (RMCRCGHPPR…KVAKMRDAAF (416 aa)) the chain is Cytoplasmic. Positions 1184-1209 (LEERVRALGDRVDCINSQLNRVLDSM) form a coiled coil. One can recognise a Nudix hydrolase domain in the interval 1394–1546 (WKRTSAGVML…VSILEKVAKM (153 aa)). The short motif at 1428 to 1449 (GMVEPGQLVTQALKAEFGEEAM) is the Nudix box element.

It belongs to the transient receptor (TC 1.A.4) family. LTrpC subfamily. TRPM2 sub-subfamily. In terms of assembly, homotetramer.

The protein localises to the cell membrane. With respect to regulation, activated by phosphatidylinositol 4,5-bisphosphate (PIP2). Although PIP2 is essential for the channel activation, its contribution to the level of channel activity is minimal. Also activated by diphosphate ribose-2'-phosphate. Upon binding to ADPR, channel activation requires only a short initial cytosolic Ca(2+) increase, then the activation is sustained by the uptake of extracellular Ca(2+). Activated by 2-aminoethyl diphenylborinate (2-APB) in a Ca(2+)-dependent manner. 2-APB prevents the inactivation of the channel. Functionally, nonselective, voltage-independent cation channel that mediates Ca(2+) and to a lesser extent Na(+) influx, leading to increased cytoplasmic Ca(2+) levels. Functions as a ligand-gated ion channel. Binding of ADP-ribose causes a conformation change; the channel is primed but still requires Ca(2+) binding to trigger channel opening. May have ADP-ribose pyrophosphatase activity which reduces ADP-ribose levels induced by oxidative stress, thus preventing the channel activation by reactive oxygen species. The polypeptide is Transient receptor potential cation channel subfamily M member-like 2 (Nematostella vectensis (Starlet sea anemone)).